Reading from the N-terminus, the 174-residue chain is uncharacterized protein (174 aa).

This is an uncharacterized protein from Mycobacterium tuberculosis (strain CDC 1551 / Oshkosh).